The sequence spans 289 residues: D-psicose 3-epimerase (289 aa).

Substrate-binding residues include Tyr-6 and Ala-107. Glu-150 (proton donor/acceptor) is an active-site residue. Glu-150 contributes to the Mn(2+) binding site. Substrate-binding positions include Glu-156 and 183–186 (DTFH). Mn(2+) is bound by residues Asp-183 and His-209. Arg-215 provides a ligand contact to substrate. Glu-244 acts as the Proton donor/acceptor in catalysis. Mn(2+) is bound at residue Glu-244.

It belongs to the hyi family. In terms of assembly, homotetramer. Mn(2+) serves as cofactor. It depends on Co(2+) as a cofactor.

It carries out the reaction D-allulose = keto-D-fructose. Inhibited by Zn(2+) and Cu(2+). Functionally, involved in the biosynthesis of D-psicose. Catalyzes the reversible epimerization of D-fructose at the C3 position to yield D-psicose. The enzyme is highly specific for D-psicose and shows very low activity with D-tagatose. The substrate specificity decreases in the following order: D-fructose, D-tagatose, D-ribulose, D-xylulose, and D-sorbose. It shows a higher level of activity for cis ketoses than for trans-ketoses. The sequence is that of D-psicose 3-epimerase (dpe) from Agrobacterium fabrum (strain C58 / ATCC 33970) (Agrobacterium tumefaciens (strain C58)).